A 482-amino-acid chain; its full sequence is Malvidin galactosylase UGT88C3 (482 aa).

Catalysis depends on His-16, which acts as the Proton acceptor. The active-site Charge relay is Asp-117. Residues Ser-279, Trp-345, Ala-349, His-366, Asn-370, Ser-371, and Glu-374 each coordinate UDP.

The protein belongs to the UDP-glycosyltransferase family.

It localises to the endoplasmic reticulum. Its subcellular location is the nucleus. The enzyme catalyses malvidin + UDP-alpha-D-galactose = malvidin 3-O-beta-D-galactoside + UDP + H(+). It participates in pigment biosynthesis; anthocyanin biosynthesis. UDP-glycosyltransferase which uses UDP-galactose and malvidin as substrates to catalyze the biosynthesis of malvidin 3-O-galactoside, an anthocyanin conferring purple pigmentation. This Oryza sativa subsp. indica (Rice) protein is Malvidin galactosylase UGT88C3.